A 636-amino-acid chain; its full sequence is 1-deoxy-D-xylulose-5-phosphate synthase (636 aa).

Residues histidine 75 and 116 to 118 (AHS) each bind thiamine diphosphate. Aspartate 147 serves as a coordination point for Mg(2+). Thiamine diphosphate-binding positions include 148-149 (GA), asparagine 177, tyrosine 288, and glutamate 370. Position 177 (asparagine 177) interacts with Mg(2+).

It belongs to the transketolase family. DXPS subfamily. As to quaternary structure, homodimer. Mg(2+) serves as cofactor. It depends on thiamine diphosphate as a cofactor.

The enzyme catalyses D-glyceraldehyde 3-phosphate + pyruvate + H(+) = 1-deoxy-D-xylulose 5-phosphate + CO2. Its pathway is metabolic intermediate biosynthesis; 1-deoxy-D-xylulose 5-phosphate biosynthesis; 1-deoxy-D-xylulose 5-phosphate from D-glyceraldehyde 3-phosphate and pyruvate: step 1/1. Its function is as follows. Catalyzes the acyloin condensation reaction between C atoms 2 and 3 of pyruvate and glyceraldehyde 3-phosphate to yield 1-deoxy-D-xylulose-5-phosphate (DXP). The sequence is that of 1-deoxy-D-xylulose-5-phosphate synthase from Ralstonia nicotianae (strain ATCC BAA-1114 / GMI1000) (Ralstonia solanacearum).